We begin with the raw amino-acid sequence, 31 residues long: Phalloidin proprotein (31 aa).

Positions 1 to 10 are excised as a propeptide; that stretch reads MSDINATRLP. Residues 11-17 constitute a cross-link (cyclopeptide (Ala-Pro)); sequence AWLATCP. Positions 12 to 16 form a cross-link, 2'-cysteinyl-6'-hydroxytryptophan sulfoxide (Trp-Cys); sequence WLATC. A propeptide spanning residues 18–31 is cleaved from the precursor; that stretch reads CAGDDVNPLLTRGE.

It belongs to the MSDIN fungal toxin family. Processed by the macrocyclase-peptidase enzyme POPB to yield a toxic cyclic heptapeptide. POPB first removes 10 residues from the N-terminus. Conformational trapping of the remaining peptide forces the enzyme to release this intermediate rather than proceed to macrocyclization. The enzyme rebinds the remaining peptide in a different conformation and catalyzes macrocyclization of the N-terminal 7 residues.

In terms of biological role, major toxin that belongs to the bicyclic heptapeptides called phallotoxins. Although structurally related to amatoxins, phallotoxins have a different mode of action, which is the stabilization of F-actin. Phallotoxins are poisonous when administered parenterally, but not orally because of poor absorption. The polypeptide is Phalloidin proprotein (Amanita ocreata (Western North American destroying angel)).